The chain runs to 507 residues: ATP synthase subunit alpha, chloroplastic (507 aa).

Residue 170 to 177 (GDRQTGKT) participates in ATP binding.

This sequence belongs to the ATPase alpha/beta chains family. As to quaternary structure, F-type ATPases have 2 components, CF(1) - the catalytic core - and CF(0) - the membrane proton channel. CF(1) has five subunits: alpha(3), beta(3), gamma(1), delta(1), epsilon(1). CF(0) has four main subunits: a, b, b' and c.

The protein localises to the plastid. It localises to the chloroplast thylakoid membrane. It carries out the reaction ATP + H2O + 4 H(+)(in) = ADP + phosphate + 5 H(+)(out). Its function is as follows. Produces ATP from ADP in the presence of a proton gradient across the membrane. The alpha chain is a regulatory subunit. The sequence is that of ATP synthase subunit alpha, chloroplastic from Ipomoea purpurea (Common morning glory).